The primary structure comprises 158 residues: Transcription elongation factor GreA (158 aa).

Residues 8–74 (TKGGYNKLKD…TLERVLSTAT (67 aa)) are a coiled coil.

Belongs to the GreA/GreB family.

Necessary for efficient RNA polymerase transcription elongation past template-encoded arresting sites. The arresting sites in DNA have the property of trapping a certain fraction of elongating RNA polymerases that pass through, resulting in locked ternary complexes. Cleavage of the nascent transcript by cleavage factors such as GreA or GreB allows the resumption of elongation from the new 3'terminus. GreA releases sequences of 2 to 3 nucleotides. This Chloroherpeton thalassium (strain ATCC 35110 / GB-78) protein is Transcription elongation factor GreA.